Reading from the N-terminus, the 191-residue chain is Prostaglandin-H2 D-isomerase (191 aa).

The first 24 residues, 1–24 (MATPNRPWMGLLLLGVLGVLQTPA), serve as a signal peptide directing secretion. The N-linked (GlcNAc...) asparagine glycan is linked to Asn51. Residue Cys65 is the Nucleophile of the active site. Asn78 carries an N-linked (GlcNAc...) asparagine glycan. An intrachain disulfide couples Cys89 to Cys186.

It belongs to the calycin superfamily. Lipocalin family. In terms of assembly, monomer. As to expression, in the male reproductive system, it is expressed in the testis and epididymis, and is secreted into the seminal fluid.

Its subcellular location is the rough endoplasmic reticulum. The protein resides in the nucleus membrane. It localises to the golgi apparatus. It is found in the cytoplasm. The protein localises to the perinuclear region. Its subcellular location is the secreted. The catalysed reaction is prostaglandin H2 = prostaglandin D2. Functionally, catalyzes the conversion of PGH2 to PGD2, a prostaglandin involved in smooth muscle contraction/relaxation and a potent inhibitor of platelet aggregation. Involved in a variety of CNS functions, such as sedation, NREM sleep and PGE2-induced allodynia, and may have an anti-apoptotic role in oligodendrocytes. Binds small non-substrate lipophilic molecules, including biliverdin, bilirubin, retinal, retinoic acid and thyroid hormone, and may act as a scavenger for harmful hydrophobic molecules and as a secretory retinoid and thyroid hormone transporter. Possibly involved in development and maintenance of the blood-brain, blood-retina, blood-aqueous humor and blood-testis barrier. It is likely to play important roles in both maturation and maintenance of the central nervous system and male reproductive system. Involved in PLA2G3-dependent maturation of mast cells. PLA2G3 is secreted by immature mast cells and acts on nearby fibroblasts upstream to PTDGS to synthesize PGD2, which in turn promotes mast cell maturation and degranulation via PTGDR. The sequence is that of Prostaglandin-H2 D-isomerase (PTGDS) from Ovis aries (Sheep).